The following is a 188-amino-acid chain: ATP synthase subunit b (188 aa).

The helical transmembrane segment at 30-50 (IVWSLIPFLIILIVFWKLVLP) threads the bilayer.

The protein belongs to the ATPase B chain family. As to quaternary structure, F-type ATPases have 2 components, F(1) - the catalytic core - and F(0) - the membrane proton channel. F(1) has five subunits: alpha(3), beta(3), gamma(1), delta(1), epsilon(1). F(0) has three main subunits: a(1), b(2) and c(10-14). The alpha and beta chains form an alternating ring which encloses part of the gamma chain. F(1) is attached to F(0) by a central stalk formed by the gamma and epsilon chains, while a peripheral stalk is formed by the delta and b chains.

It localises to the cell membrane. Its function is as follows. F(1)F(0) ATP synthase produces ATP from ADP in the presence of a proton or sodium gradient. F-type ATPases consist of two structural domains, F(1) containing the extramembraneous catalytic core and F(0) containing the membrane proton channel, linked together by a central stalk and a peripheral stalk. During catalysis, ATP synthesis in the catalytic domain of F(1) is coupled via a rotary mechanism of the central stalk subunits to proton translocation. Functionally, component of the F(0) channel, it forms part of the peripheral stalk, linking F(1) to F(0). The sequence is that of ATP synthase subunit b from Corynebacterium glutamicum (strain R).